The primary structure comprises 508 residues: Fc receptor-like protein 2 (508 aa).

Residues methionine 1–serine 19 form the signal peptide. Ig-like C2-type domains follow at residues leucine 20–valine 98, proline 109–arginine 187, proline 201–asparagine 290, and proline 300–serine 387. Residues leucine 20–valine 401 are Extracellular-facing. A disulfide bond links cysteine 128 and cysteine 177. N-linked (GlcNAc...) asparagine glycans are attached at residues asparagine 204, asparagine 234, asparagine 343, asparagine 355, and asparagine 365. 2 disulfide bridges follow: cysteine 226–cysteine 275 and cysteine 321–cysteine 368. The chain crosses the membrane as a helical span at residues leucine 402–phenylalanine 422. Residues histidine 423–serine 508 are Cytoplasmic-facing. The interval serine 429–proline 453 is disordered. Residues proline 441–threonine 452 show a composition bias toward polar residues. Short sequence motifs (ITIM motif) lie at residues phenylalanine 446 to proline 451, proline 460 to valine 465, valine 472 to valine 477, and valine 500 to valine 505.

As to quaternary structure, the tyrosine-phosphorylated isoform 2 interacts with PTPN6. In terms of processing, isoform 2 is N- and O-glycosylated, and phosphorylated. As to expression, expressed in the secondary lymphoid organs, spleen and lymph node. Expression is limited to the mature B-cell lines. Highly expressed in CD19 and within the mantle zones of the tonsil tissue. Isoform 2 is expressed in the spleen, peripheral blood and bone marrow. Isoform 2 and isoform 4 are expressed in B-cell lines. Preferentially expressed in memory B-cells (at protein level).

The protein localises to the cell membrane. Its function is as follows. May have an regulatory role in normal and neoplastic B cell development. This Homo sapiens (Human) protein is Fc receptor-like protein 2 (FCRL2).